The primary structure comprises 341 residues: L-threonine 3-dehydrogenase (341 aa).

C38 provides a ligand contact to Zn(2+). Catalysis depends on charge relay system residues T40 and H43. H63, E64, C93, C96, C99, and C107 together coordinate Zn(2+). Residues I175, D195, R200, 262-264 (LGI), and 286-287 (IY) contribute to the NAD(+) site.

Belongs to the zinc-containing alcohol dehydrogenase family. Homotetramer. It depends on Zn(2+) as a cofactor.

The protein localises to the cytoplasm. The enzyme catalyses L-threonine + NAD(+) = (2S)-2-amino-3-oxobutanoate + NADH + H(+). It functions in the pathway amino-acid degradation; L-threonine degradation via oxydo-reductase pathway; glycine from L-threonine: step 1/2. In terms of biological role, catalyzes the NAD(+)-dependent oxidation of L-threonine to 2-amino-3-ketobutyrate. This Salmonella gallinarum (strain 287/91 / NCTC 13346) protein is L-threonine 3-dehydrogenase.